The sequence spans 180 residues: Ribosome maturation factor RimM (180 aa).

The region spanning 104–177 (PEEFHDHQLV…RVVVDPPGGL (74 aa)) is the PRC barrel domain.

This sequence belongs to the RimM family. In terms of assembly, binds ribosomal protein uS19.

The protein resides in the cytoplasm. Its function is as follows. An accessory protein needed during the final step in the assembly of 30S ribosomal subunit, possibly for assembly of the head region. Essential for efficient processing of 16S rRNA. May be needed both before and after RbfA during the maturation of 16S rRNA. It has affinity for free ribosomal 30S subunits but not for 70S ribosomes. This is Ribosome maturation factor RimM from Salinispora arenicola (strain CNS-205).